The sequence spans 108 residues: T cell receptor alpha variable 1-1 (108 aa).

An N-terminal signal peptide occupies residues 1-18 (MWGAFLLYVSMKMGGTAG). The Ig-like domain maps to 19-108 (QSLEQPSEVT…DSASYFCAVR (90 aa)). N-linked (GlcNAc...) asparagine glycosylation is present at Asn-38. The cysteines at positions 39 and 105 are disulfide-linked.

In terms of assembly, alpha-beta TR is a heterodimer composed of an alpha and beta chain; disulfide-linked. The alpha-beta TR is associated with the transmembrane signaling CD3 coreceptor proteins to form the TR-CD3 (TcR or TCR). The assembly of alpha-beta TR heterodimers with CD3 occurs in the endoplasmic reticulum where a single alpha-beta TR heterodimer associates with one CD3D-CD3E heterodimer, one CD3G-CD3E heterodimer and one CD247 homodimer forming a stable octameric structure. CD3D-CD3E and CD3G-CD3E heterodimers preferentially associate with TR alpha and TR beta chains, respectively. The association of the CD247 homodimer is the last step of TcR assembly in the endoplasmic reticulum and is required for transport to the cell surface.

The protein localises to the cell membrane. In terms of biological role, v region of the variable domain of T cell receptor (TR) alpha chain that participates in the antigen recognition. Alpha-beta T cell receptors are antigen specific receptors which are essential to the immune response and are present on the cell surface of T lymphocytes. Recognize peptide-major histocompatibility (MH) (pMH) complexes that are displayed by antigen presenting cells (APC), a prerequisite for efficient T cell adaptive immunity against pathogens. Binding of alpha-beta TR to pMH complex initiates TR-CD3 clustering on the cell surface and intracellular activation of LCK that phosphorylates the ITAM motifs of CD3G, CD3D, CD3E and CD247 enabling the recruitment of ZAP70. In turn ZAP70 phosphorylates LAT, which recruits numerous signaling molecules to form the LAT signalosome. The LAT signalosome propagates signal branching to three major signaling pathways, the calcium, the mitogen-activated protein kinase (MAPK) kinase and the nuclear factor NF-kappa-B (NF-kB) pathways, leading to the mobilization of transcription factors that are critical for gene expression and essential for T cell growth and differentiation. The T cell repertoire is generated in the thymus, by V-(D)-J rearrangement. This repertoire is then shaped by intrathymic selection events to generate a peripheral T cell pool of self-MH restricted, non-autoaggressive T cells. Post-thymic interaction of alpha-beta TR with the pMH complexes shapes TR structural and functional avidity. This chain is T cell receptor alpha variable 1-1, found in Homo sapiens (Human).